We begin with the raw amino-acid sequence, 181 residues long: ATP synthase subunit delta (181 aa).

It belongs to the ATPase delta chain family. As to quaternary structure, F-type ATPases have 2 components, F(1) - the catalytic core - and F(0) - the membrane proton channel. F(1) has five subunits: alpha(3), beta(3), gamma(1), delta(1), epsilon(1). F(0) has three main subunits: a(1), b(2) and c(10-14). The alpha and beta chains form an alternating ring which encloses part of the gamma chain. F(1) is attached to F(0) by a central stalk formed by the gamma and epsilon chains, while a peripheral stalk is formed by the delta and b chains.

The protein localises to the cell inner membrane. Functionally, f(1)F(0) ATP synthase produces ATP from ADP in the presence of a proton or sodium gradient. F-type ATPases consist of two structural domains, F(1) containing the extramembraneous catalytic core and F(0) containing the membrane proton channel, linked together by a central stalk and a peripheral stalk. During catalysis, ATP synthesis in the catalytic domain of F(1) is coupled via a rotary mechanism of the central stalk subunits to proton translocation. Its function is as follows. This protein is part of the stalk that links CF(0) to CF(1). It either transmits conformational changes from CF(0) to CF(1) or is implicated in proton conduction. This chain is ATP synthase subunit delta, found in Chlorobaculum parvum (strain DSM 263 / NCIMB 8327) (Chlorobium vibrioforme subsp. thiosulfatophilum).